The following is a 149-amino-acid chain: Ribonuclease pancreatic (149 aa).

An N-terminal signal peptide occupies residues 1–25; the sequence is MGLEKSLILLPLLVLVLAWVQPSLG. Lys32 and Arg35 together coordinate substrate. His37 functions as the Proton acceptor in the catalytic mechanism. 4 disulfides stabilise this stretch: Cys51-Cys109, Cys65-Cys120, Cys83-Cys135, and Cys90-Cys97. 66–70 is a binding site for substrate; it reads KRVNT. N-linked (GlcNAc...) asparagine glycosylation occurs at Asn87. Substrate is bound by residues Lys91 and Arg110. His144 functions as the Proton donor in the catalytic mechanism.

The protein belongs to the pancreatic ribonuclease family. In terms of assembly, monomer. Interacts with and forms tight 1:1 complexes with RNH1. Dimerization of two such complexes may occur. Interaction with RNH1 inhibits this protein. In terms of tissue distribution, pancreas.

It is found in the secreted. It catalyses the reaction an [RNA] containing cytidine + H2O = an [RNA]-3'-cytidine-3'-phosphate + a 5'-hydroxy-ribonucleotide-3'-[RNA].. It carries out the reaction an [RNA] containing uridine + H2O = an [RNA]-3'-uridine-3'-phosphate + a 5'-hydroxy-ribonucleotide-3'-[RNA].. Functionally, endonuclease that catalyzes the cleavage of RNA on the 3' side of pyrimidine nucleotides. Acts on single-stranded and double-stranded RNA. This is Ribonuclease pancreatic (RNASE1) from Acomys cahirinus (Cairo spiny mouse).